We begin with the raw amino-acid sequence, 208 residues long: Protein-L-isoaspartate O-methyltransferase (208 aa).

Ser-59 is an active-site residue.

This sequence belongs to the methyltransferase superfamily. L-isoaspartyl/D-aspartyl protein methyltransferase family.

The protein resides in the cytoplasm. It catalyses the reaction [protein]-L-isoaspartate + S-adenosyl-L-methionine = [protein]-L-isoaspartate alpha-methyl ester + S-adenosyl-L-homocysteine. Functionally, catalyzes the methyl esterification of L-isoaspartyl residues in peptides and proteins that result from spontaneous decomposition of normal L-aspartyl and L-asparaginyl residues. It plays a role in the repair and/or degradation of damaged proteins. This is Protein-L-isoaspartate O-methyltransferase from Salmonella arizonae (strain ATCC BAA-731 / CDC346-86 / RSK2980).